A 55-amino-acid polypeptide reads, in one-letter code: MAKDGPRIIVKMESSAGTGFYYTTTKNRRNTQAKLELKKYDPVAKKHVVFREKKV.

It belongs to the bacterial ribosomal protein bL33 family. Part of the 50S ribosomal subunit. Contacts protein L35.

Functionally, binds the 23S rRNA and the E site tRNA. The chain is Large ribosomal subunit protein bL33 (rpmG) from Deinococcus radiodurans (strain ATCC 13939 / DSM 20539 / JCM 16871 / CCUG 27074 / LMG 4051 / NBRC 15346 / NCIMB 9279 / VKM B-1422 / R1).